The sequence spans 204 residues: Large ribosomal subunit protein uL4 (204 aa).

Positions 49–72 (QKNRAAVSGGGKKPWRQKGTGRAR) are disordered.

It belongs to the universal ribosomal protein uL4 family. In terms of assembly, part of the 50S ribosomal subunit.

One of the primary rRNA binding proteins, this protein initially binds near the 5'-end of the 23S rRNA. It is important during the early stages of 50S assembly. It makes multiple contacts with different domains of the 23S rRNA in the assembled 50S subunit and ribosome. Functionally, forms part of the polypeptide exit tunnel. The polypeptide is Large ribosomal subunit protein uL4 (Saccharophagus degradans (strain 2-40 / ATCC 43961 / DSM 17024)).